The sequence spans 173 residues: Mesencephalic astrocyte-derived neurotrophic factor homolog (173 aa).

Residues Met-1–Ala-22 form the signal peptide. 4 disulfide bridges follow: Cys-28–Cys-114, Cys-31–Cys-103, Cys-61–Cys-72, and Cys-148–Cys-151.

The protein belongs to the ARMET family.

The protein resides in the secreted. In terms of biological role, required during the maturation of the embryonic nervous system for maintenance of neuronal and cuticular connectivity. Essential for maintenance of dopaminergic neurons and dopamine levels. This is Mesencephalic astrocyte-derived neurotrophic factor homolog from Drosophila simulans (Fruit fly).